The following is a 352-amino-acid chain: tRNA-specific 2-thiouridylase MnmA (352 aa).

ATP contacts are provided by residues 7-14 (GLSGGVDS) and L33. The Nucleophile role is filled by C94. The cysteines at positions 94 and 193 are disulfide-linked. G119 contacts ATP. Positions 143–145 (KDQ) are interaction with tRNA. The active-site Cysteine persulfide intermediate is C193. The interaction with tRNA stretch occupies residues 298–299 (RY).

This sequence belongs to the MnmA/TRMU family.

It is found in the cytoplasm. It carries out the reaction S-sulfanyl-L-cysteinyl-[protein] + uridine(34) in tRNA + AH2 + ATP = 2-thiouridine(34) in tRNA + L-cysteinyl-[protein] + A + AMP + diphosphate + H(+). Its function is as follows. Catalyzes the 2-thiolation of uridine at the wobble position (U34) of tRNA, leading to the formation of s(2)U34. The chain is tRNA-specific 2-thiouridylase MnmA from Microcystis aeruginosa (strain NIES-843 / IAM M-2473).